We begin with the raw amino-acid sequence, 372 residues long: Tetraacyldisaccharide 4'-kinase (372 aa).

60–67 provides a ligand contact to ATP; sequence TVGGSGKT.

Belongs to the LpxK family.

The catalysed reaction is a lipid A disaccharide + ATP = a lipid IVA + ADP + H(+). The protein operates within glycolipid biosynthesis; lipid IV(A) biosynthesis; lipid IV(A) from (3R)-3-hydroxytetradecanoyl-[acyl-carrier-protein] and UDP-N-acetyl-alpha-D-glucosamine: step 6/6. In terms of biological role, transfers the gamma-phosphate of ATP to the 4'-position of a tetraacyldisaccharide 1-phosphate intermediate (termed DS-1-P) to form tetraacyldisaccharide 1,4'-bis-phosphate (lipid IVA). The sequence is that of Tetraacyldisaccharide 4'-kinase from Psychrobacter cryohalolentis (strain ATCC BAA-1226 / DSM 17306 / VKM B-2378 / K5).